The chain runs to 495 residues: UDP-N-acetylmuramoyl-L-alanyl-D-glutamate--2,6-diaminopimelate ligase (495 aa).

A UDP-N-acetyl-alpha-D-muramoyl-L-alanyl-D-glutamate-binding site is contributed by Ser-29. 111 to 117 serves as a coordination point for ATP; it reads GTNGKTS. Residues 153–154, Ser-180, Gln-186, and Arg-188 each bind UDP-N-acetyl-alpha-D-muramoyl-L-alanyl-D-glutamate; that span reads TT. At Lys-220 the chain carries N6-carboxylysine. Residues Arg-384, 408–411, Gly-459, and Glu-463 contribute to the meso-2,6-diaminopimelate site; that span reads DNPR. The Meso-diaminopimelate recognition motif signature appears at 408 to 411; sequence DNPR.

It belongs to the MurCDEF family. MurE subfamily. It depends on Mg(2+) as a cofactor. In terms of processing, carboxylation is probably crucial for Mg(2+) binding and, consequently, for the gamma-phosphate positioning of ATP.

The protein resides in the cytoplasm. The catalysed reaction is UDP-N-acetyl-alpha-D-muramoyl-L-alanyl-D-glutamate + meso-2,6-diaminopimelate + ATP = UDP-N-acetyl-alpha-D-muramoyl-L-alanyl-gamma-D-glutamyl-meso-2,6-diaminopimelate + ADP + phosphate + H(+). The protein operates within cell wall biogenesis; peptidoglycan biosynthesis. Catalyzes the addition of meso-diaminopimelic acid to the nucleotide precursor UDP-N-acetylmuramoyl-L-alanyl-D-glutamate (UMAG) in the biosynthesis of bacterial cell-wall peptidoglycan. This chain is UDP-N-acetylmuramoyl-L-alanyl-D-glutamate--2,6-diaminopimelate ligase, found in Xanthomonas campestris pv. campestris (strain 8004).